The primary structure comprises 322 residues: Ubiquinone biosynthesis O-methyltransferase, mitochondrial (322 aa).

The transit peptide at 1 to 37 (MLASVRVNQLQRLLLSARRLSSSPIIPPSRLLHQRLF) directs the protein to the mitochondrion. The disordered stretch occupies residues 46 to 75 (AASFSSSHPKIQTLEGKASNKSRSTSSTTS). Residues R108, G139, D160, and L205 each coordinate S-adenosyl-L-methionine. Mg(2+) contacts are provided by E206, E209, and H210.

It belongs to the class I-like SAM-binding methyltransferase superfamily. UbiG/COQ3 family. Component of a multi-subunit COQ enzyme complex. The cofactor is Mg(2+).

It is found in the mitochondrion inner membrane. The enzyme catalyses a 3,4-dihydroxy-5-(all-trans-polyprenyl)benzoate + S-adenosyl-L-methionine = a 4-hydroxy-3-methoxy-5-(all-trans-polyprenyl)benzoate + S-adenosyl-L-homocysteine + H(+). It catalyses the reaction a 3-demethylubiquinone + S-adenosyl-L-methionine = a ubiquinone + S-adenosyl-L-homocysteine. The catalysed reaction is a 3-demethylubiquinol + S-adenosyl-L-methionine = a ubiquinol + S-adenosyl-L-homocysteine + H(+). It functions in the pathway cofactor biosynthesis; ubiquinone biosynthesis. Functionally, O-methyltransferase required for two non-consecutive steps during ubiquinone biosynthesis. Catalyzes the 2 O-methylation of 3,4-dihydroxy-5-(all-trans-polyprenyl)benzoic acid into 4-hydroxy-3-methoxy-5-(all-trans-polyprenyl)benzoic acid. Also catalyzes the last step of ubiquinone biosynthesis by mediating methylation of 3-demethylubiquinone into ubiquinone. Also able to mediate the methylation of 3-demethylubiquinol into ubiquinol. The chain is Ubiquinone biosynthesis O-methyltransferase, mitochondrial from Arabidopsis thaliana (Mouse-ear cress).